A 528-amino-acid chain; its full sequence is Glucose-6-phosphate isomerase (528 aa).

Glutamate 322 (proton donor) is an active-site residue. Catalysis depends on residues histidine 351 and lysine 455.

It belongs to the GPI family.

It is found in the cytoplasm. It carries out the reaction alpha-D-glucose 6-phosphate = beta-D-fructose 6-phosphate. Its pathway is carbohydrate biosynthesis; gluconeogenesis. It participates in carbohydrate degradation; glycolysis; D-glyceraldehyde 3-phosphate and glycerone phosphate from D-glucose: step 2/4. Its function is as follows. Catalyzes the reversible isomerization of glucose-6-phosphate to fructose-6-phosphate. The protein is Glucose-6-phosphate isomerase of Nostoc punctiforme (strain ATCC 29133 / PCC 73102).